Consider the following 309-residue polypeptide: Aspartate carbamoyltransferase catalytic subunit (309 aa).

Carbamoyl phosphate is bound by residues Arg-55 and Thr-56. Lys-85 provides a ligand contact to L-aspartate. Carbamoyl phosphate is bound by residues Arg-106, His-135, and Gln-138. The L-aspartate site is built by Arg-168 and Arg-230. Carbamoyl phosphate-binding residues include Leu-268 and Pro-269.

It belongs to the aspartate/ornithine carbamoyltransferase superfamily. ATCase family. In terms of assembly, heterododecamer (2C3:3R2) of six catalytic PyrB chains organized as two trimers (C3), and six regulatory PyrI chains organized as three dimers (R2).

The enzyme catalyses carbamoyl phosphate + L-aspartate = N-carbamoyl-L-aspartate + phosphate + H(+). Its pathway is pyrimidine metabolism; UMP biosynthesis via de novo pathway; (S)-dihydroorotate from bicarbonate: step 2/3. In terms of biological role, catalyzes the condensation of carbamoyl phosphate and aspartate to form carbamoyl aspartate and inorganic phosphate, the committed step in the de novo pyrimidine nucleotide biosynthesis pathway. This Vibrio vulnificus (strain CMCP6) protein is Aspartate carbamoyltransferase catalytic subunit.